The primary structure comprises 147 residues: UPF0260 protein PMI1174 (147 aa).

This sequence belongs to the UPF0260 family.

The protein is UPF0260 protein PMI1174 of Proteus mirabilis (strain HI4320).